A 93-amino-acid polypeptide reads, in one-letter code: Ribonuclease P protein component 1 (93 aa).

This sequence belongs to the eukaryotic/archaeal RNase P protein component 1 family. As to quaternary structure, consists of a catalytic RNA component and at least 4-5 protein subunits.

Its subcellular location is the cytoplasm. The catalysed reaction is Endonucleolytic cleavage of RNA, removing 5'-extranucleotides from tRNA precursor.. Functionally, part of ribonuclease P, a protein complex that generates mature tRNA molecules by cleaving their 5'-ends. This chain is Ribonuclease P protein component 1, found in Methanothermobacter thermautotrophicus (strain ATCC 29096 / DSM 1053 / JCM 10044 / NBRC 100330 / Delta H) (Methanobacterium thermoautotrophicum).